The sequence spans 181 residues: 6,7-dimethyl-8-ribityllumazine synthase (181 aa).

Residues Tyr-30, Ala-61 to Glu-63, and Cys-87 to Ile-89 each bind 5-amino-6-(D-ribitylamino)uracil. A (2S)-2-hydroxy-3-oxobutyl phosphate-binding site is contributed by Glu-92–Thr-93. Residue His-95 is the Proton donor of the active site. Residue Asn-120 participates in 5-amino-6-(D-ribitylamino)uracil binding. Position 134 (Arg-134) interacts with (2S)-2-hydroxy-3-oxobutyl phosphate.

It belongs to the DMRL synthase family.

The enzyme catalyses (2S)-2-hydroxy-3-oxobutyl phosphate + 5-amino-6-(D-ribitylamino)uracil = 6,7-dimethyl-8-(1-D-ribityl)lumazine + phosphate + 2 H2O + H(+). It functions in the pathway cofactor biosynthesis; riboflavin biosynthesis; riboflavin from 2-hydroxy-3-oxobutyl phosphate and 5-amino-6-(D-ribitylamino)uracil: step 1/2. Functionally, catalyzes the formation of 6,7-dimethyl-8-ribityllumazine by condensation of 5-amino-6-(D-ribitylamino)uracil with 3,4-dihydroxy-2-butanone 4-phosphate. This is the penultimate step in the biosynthesis of riboflavin. In Beijerinckia indica subsp. indica (strain ATCC 9039 / DSM 1715 / NCIMB 8712), this protein is 6,7-dimethyl-8-ribityllumazine synthase.